We begin with the raw amino-acid sequence, 48 residues long: Mating-type pheromone BAP1(2) (48 aa).

At C45 the chain carries Cysteine methyl ester. C45 carries the S-farnesyl cysteine lipid modification. The propeptide at 46–48 (VRG) is removed in mature form.

The protein localises to the cell membrane. Functionally, activates B-regulated development. This Schizophyllum commune (Split gill fungus) protein is Mating-type pheromone BAP1(2) (BAP1(2)).